The following is a 292-amino-acid chain: Malonyl-S-ACP:biotin-protein carboxyltransferase MADD (292 aa).

One can recognise a CoA carboxyltransferase C-terminal domain in the interval 1–281; it reads MEIMMGQGRL…RGKVMAMMDK (281 aa).

It localises to the cytoplasm. The enzyme catalyses N(6)-biotinyl-L-lysyl-[protein] + malonyl-[ACP] = N(6)-carboxybiotinyl-L-lysyl-[protein] + acetyl-[ACP]. In terms of biological role, gamma subunit of the biotin-dependent malonate decarboxylase multienzyme complex (EC 7.2.4.4). The two subunits MADC and MADD are required for the transfer of the malonate carboxy group from the acyl-carrier protein (ACP) to the prosthetic group of the biotin carrier MADF. Required for the regeneration of ACP. The polypeptide is Malonyl-S-ACP:biotin-protein carboxyltransferase MADD (madD) (Malonomonas rubra).